The primary structure comprises 517 residues: Protein translocase subunit SecD (517 aa).

Transmembrane regions (helical) follow at residues leucine 5–aspartate 25, isoleucine 357–phenylalanine 377, phenylalanine 380–phenylalanine 400, proline 407–phenylalanine 427, isoleucine 455–glycine 475, and glycine 479–serine 499.

It belongs to the SecD/SecF family. SecD subfamily. Forms a complex with SecF. Part of the essential Sec protein translocation apparatus which comprises SecA, SecYEG and auxiliary proteins SecDF. Other proteins may also be involved.

Its subcellular location is the cell inner membrane. In terms of biological role, part of the Sec protein translocase complex. Interacts with the SecYEG preprotein conducting channel. SecDF uses the proton motive force (PMF) to complete protein translocation after the ATP-dependent function of SecA. In Calditerrivibrio nitroreducens (strain DSM 19672 / NBRC 101217 / Yu37-1), this protein is Protein translocase subunit SecD.